A 327-amino-acid chain; its full sequence is DNA-directed RNA polymerase subunit alpha (327 aa).

Residues 1–233 form an alpha N-terminal domain (alpha-NTD) region; it reads MQNSASEFLK…DQLSIFADLQ (233 aa). Positions 247–327 are alpha C-terminal domain (alpha-CTD); that stretch reads IDPILLRPVD…NWPPAGLEKP (81 aa).

It belongs to the RNA polymerase alpha chain family. As to quaternary structure, homodimer. The RNAP catalytic core consists of 2 alpha, 1 beta, 1 beta' and 1 omega subunit. When a sigma factor is associated with the core the holoenzyme is formed, which can initiate transcription.

The catalysed reaction is RNA(n) + a ribonucleoside 5'-triphosphate = RNA(n+1) + diphosphate. DNA-dependent RNA polymerase catalyzes the transcription of DNA into RNA using the four ribonucleoside triphosphates as substrates. This chain is DNA-directed RNA polymerase subunit alpha, found in Chromobacterium violaceum (strain ATCC 12472 / DSM 30191 / JCM 1249 / CCUG 213 / NBRC 12614 / NCIMB 9131 / NCTC 9757 / MK).